A 361-amino-acid polypeptide reads, in one-letter code: S-adenosylmethionine:tRNA ribosyltransferase-isomerase (361 aa).

The protein belongs to the QueA family. In terms of assembly, monomer.

It is found in the cytoplasm. The catalysed reaction is 7-aminomethyl-7-carbaguanosine(34) in tRNA + S-adenosyl-L-methionine = epoxyqueuosine(34) in tRNA + adenine + L-methionine + 2 H(+). It participates in tRNA modification; tRNA-queuosine biosynthesis. Transfers and isomerizes the ribose moiety from AdoMet to the 7-aminomethyl group of 7-deazaguanine (preQ1-tRNA) to give epoxyqueuosine (oQ-tRNA). The protein is S-adenosylmethionine:tRNA ribosyltransferase-isomerase of Mesorhizobium japonicum (strain LMG 29417 / CECT 9101 / MAFF 303099) (Mesorhizobium loti (strain MAFF 303099)).